The primary structure comprises 336 residues: tRNA N6-adenosine threonylcarbamoyltransferase (336 aa).

Fe cation contacts are provided by His-114 and His-118. Substrate contacts are provided by residues 136-140 (LVSGG), Asp-169, Gly-182, Asp-186, and Asn-275. A Fe cation-binding site is contributed by Asp-301.

It belongs to the KAE1 / TsaD family. Fe(2+) is required as a cofactor.

The protein resides in the cytoplasm. The enzyme catalyses L-threonylcarbamoyladenylate + adenosine(37) in tRNA = N(6)-L-threonylcarbamoyladenosine(37) in tRNA + AMP + H(+). In terms of biological role, required for the formation of a threonylcarbamoyl group on adenosine at position 37 (t(6)A37) in tRNAs that read codons beginning with adenine. Is involved in the transfer of the threonylcarbamoyl moiety of threonylcarbamoyl-AMP (TC-AMP) to the N6 group of A37, together with TsaE and TsaB. TsaD likely plays a direct catalytic role in this reaction. The sequence is that of tRNA N6-adenosine threonylcarbamoyltransferase from Streptococcus sanguinis (strain SK36).